Reading from the N-terminus, the 692-residue chain is Elongation factor G (692 aa).

The tr-type G domain occupies 8 to 282 (ENTRNIGIMA…AVIDYLPSPL (275 aa)). Residues 17 to 24 (AHIDAGKT), 81 to 85 (DTPGH), and 135 to 138 (NKMD) contribute to the GTP site.

The protein belongs to the TRAFAC class translation factor GTPase superfamily. Classic translation factor GTPase family. EF-G/EF-2 subfamily.

Its subcellular location is the cytoplasm. Functionally, catalyzes the GTP-dependent ribosomal translocation step during translation elongation. During this step, the ribosome changes from the pre-translocational (PRE) to the post-translocational (POST) state as the newly formed A-site-bound peptidyl-tRNA and P-site-bound deacylated tRNA move to the P and E sites, respectively. Catalyzes the coordinated movement of the two tRNA molecules, the mRNA and conformational changes in the ribosome. In Bacillus cereus (strain AH820), this protein is Elongation factor G.